Reading from the N-terminus, the 312-residue chain is Pectin lyase (312 aa).

The active site involves arginine 201. The interval 254 to 274 is disordered; it reads GSGTFTDTNSVPPITNQKSPK. The span at 256–274 shows a compositional bias: polar residues; the sequence is GTFTDTNSVPPITNQKSPK.

This sequence belongs to the polysaccharide lyase 1 family.

The catalysed reaction is Eliminative cleavage of (1-&gt;4)-alpha-D-galacturonan methyl ester to give oligosaccharides with 4-deoxy-6-O-methyl-alpha-D-galact-4-enuronosyl groups at their non-reducing ends.. The sequence is that of Pectin lyase (pnl) from Pseudomonas marginalis (Pseudomonas panacis).